We begin with the raw amino-acid sequence, 438 residues long: Cysteine--tRNA ligase (438 aa).

Zn(2+) is bound at residue Cys28. Positions 30-40 match the 'HIGH' region motif; the sequence is PTVYNHLHLGN. 3 residues coordinate Zn(2+): Cys207, His232, and Glu236. The 'KMSKS' region signature appears at 264 to 268; it reads KMSKS. An ATP-binding site is contributed by Lys267.

The protein belongs to the class-I aminoacyl-tRNA synthetase family. In terms of assembly, monomer. Zn(2+) is required as a cofactor.

Its subcellular location is the cytoplasm. It carries out the reaction tRNA(Cys) + L-cysteine + ATP = L-cysteinyl-tRNA(Cys) + AMP + diphosphate. The chain is Cysteine--tRNA ligase from Onion yellows phytoplasma (strain OY-M).